We begin with the raw amino-acid sequence, 334 residues long: Holliday junction branch migration complex subunit RuvB (334 aa).

A large ATPase domain (RuvB-L) region spans residues 4–184 (ADRLIQPQDL…FGIPLRLEFY (181 aa)). ATP is bound by residues arginine 24, glycine 65, lysine 68, threonine 69, threonine 70, 131-133 (EDY), arginine 174, tyrosine 184, and arginine 221. Threonine 69 provides a ligand contact to Mg(2+). The small ATPAse domain (RuvB-S) stretch occupies residues 185–255 (NVRDLSSIVA…VAQSALDLLD (71 aa)). The interval 258–334 (SEGFDYMDRK…YSHFDLIKPD (77 aa)) is head domain (RuvB-H). Residues arginine 294, arginine 313, and arginine 318 each contribute to the DNA site.

Belongs to the RuvB family. As to quaternary structure, homohexamer. Forms an RuvA(8)-RuvB(12)-Holliday junction (HJ) complex. HJ DNA is sandwiched between 2 RuvA tetramers; dsDNA enters through RuvA and exits via RuvB. An RuvB hexamer assembles on each DNA strand where it exits the tetramer. Each RuvB hexamer is contacted by two RuvA subunits (via domain III) on 2 adjacent RuvB subunits; this complex drives branch migration. In the full resolvosome a probable DNA-RuvA(4)-RuvB(12)-RuvC(2) complex forms which resolves the HJ.

It localises to the cytoplasm. The catalysed reaction is ATP + H2O = ADP + phosphate + H(+). Functionally, the RuvA-RuvB-RuvC complex processes Holliday junction (HJ) DNA during genetic recombination and DNA repair, while the RuvA-RuvB complex plays an important role in the rescue of blocked DNA replication forks via replication fork reversal (RFR). RuvA specifically binds to HJ cruciform DNA, conferring on it an open structure. The RuvB hexamer acts as an ATP-dependent pump, pulling dsDNA into and through the RuvAB complex. RuvB forms 2 homohexamers on either side of HJ DNA bound by 1 or 2 RuvA tetramers; 4 subunits per hexamer contact DNA at a time. Coordinated motions by a converter formed by DNA-disengaged RuvB subunits stimulates ATP hydrolysis and nucleotide exchange. Immobilization of the converter enables RuvB to convert the ATP-contained energy into a lever motion, pulling 2 nucleotides of DNA out of the RuvA tetramer per ATP hydrolyzed, thus driving DNA branch migration. The RuvB motors rotate together with the DNA substrate, which together with the progressing nucleotide cycle form the mechanistic basis for DNA recombination by continuous HJ branch migration. Branch migration allows RuvC to scan DNA until it finds its consensus sequence, where it cleaves and resolves cruciform DNA. The polypeptide is Holliday junction branch migration complex subunit RuvB (Shewanella amazonensis (strain ATCC BAA-1098 / SB2B)).